The sequence spans 362 residues: Cytoskeleton protein RodZ (362 aa).

Over 1–111 (MNTEASQDQT…LGKKHKKRDG (111 aa)) the chain is Cytoplasmic. Residues 19-79 (LRQARESLGL…KLVHLPEDEL (61 aa)) form the HTH cro/C1-type domain. Residues 30-49 (QQTVAERLCLKVSTIRDIEE) constitute a DNA-binding region (H-T-H motif). Residues 112-132 (WLMSFTWLIVLVVLGLTGAWW) traverse the membrane as a helical; Signal-anchor for type II membrane protein segment. Residues 133 to 362 (WQNHQAQQAE…RVARLTVGVE (230 aa)) lie on the Periplasmic side of the membrane. The interval 151–277 (SAQLSQNGGQ…LPTADAGVSG (127 aa)) is disordered. Residues 193–221 (STSAVTNSATTSSATTSSVPTTSSVPKTT) are compositionally biased toward low complexity. The span at 223-242 (VPKTNSTEPVDTANTNTTMH) shows a compositional bias: polar residues. Over residues 246–259 (AASAAVSPSQVPQP) the composition is skewed to low complexity.

It belongs to the RodZ family.

It is found in the cell inner membrane. Functionally, cytoskeletal protein that is involved in cell-shape control through regulation of the length of the long axis. The chain is Cytoskeleton protein RodZ from Yersinia pseudotuberculosis serotype IB (strain PB1/+).